Here is a 457-residue protein sequence, read N- to C-terminus: Phosphomethylpyrimidine synthase (457 aa).

Residues Asn-88, Met-117, Tyr-146, His-182, 204–206 (SRG), 245–248 (DACR), and Glu-284 each bind substrate. His-288 serves as a coordination point for Zn(2+). Substrate is bound at residue Tyr-311. His-352 contacts Zn(2+). Residues Cys-428, Cys-431, and Cys-435 each contribute to the [4Fe-4S] cluster site.

This sequence belongs to the ThiC family. Requires [4Fe-4S] cluster as cofactor.

The enzyme catalyses 5-amino-1-(5-phospho-beta-D-ribosyl)imidazole + S-adenosyl-L-methionine = 4-amino-2-methyl-5-(phosphooxymethyl)pyrimidine + CO + 5'-deoxyadenosine + formate + L-methionine + 3 H(+). It participates in cofactor biosynthesis; thiamine diphosphate biosynthesis. Its function is as follows. Catalyzes the synthesis of the hydroxymethylpyrimidine phosphate (HMP-P) moiety of thiamine from aminoimidazole ribotide (AIR) in a radical S-adenosyl-L-methionine (SAM)-dependent reaction. The polypeptide is Phosphomethylpyrimidine synthase (Clostridium tetani (strain Massachusetts / E88)).